A 503-amino-acid chain; its full sequence is Na(+)-translocating NADH-quinone reductase subunit B (503 aa).

5 helical membrane passes run 55-75 (MMLV…NSGV), 94-114 (ISGF…FSIL), 120-140 (IFLP…VLFA), 161-181 (TLPP…GVVV), and 186-206 (FGGT…FLFF). Residue Thr-248 is modified to FMN phosphoryl threonine. Transmembrane regions (helical) follow at residues 361–381 (TSTF…IASW), 387–407 (FGIG…LIVG), 417–437 (FFIP…LVFM), 452–472 (WIYG…NPAY), and 475–495 (GVML…YFAV).

This sequence belongs to the NqrB/RnfD family. Composed of six subunits; NqrA, NqrB, NqrC, NqrD, NqrE and NqrF. FMN serves as cofactor.

The protein resides in the cell inner membrane. It carries out the reaction a ubiquinone + n Na(+)(in) + NADH + H(+) = a ubiquinol + n Na(+)(out) + NAD(+). Its function is as follows. NQR complex catalyzes the reduction of ubiquinone-1 to ubiquinol by two successive reactions, coupled with the transport of Na(+) ions from the cytoplasm to the periplasm. NqrA to NqrE are probably involved in the second step, the conversion of ubisemiquinone to ubiquinol. The chain is Na(+)-translocating NADH-quinone reductase subunit B from Chlamydia caviae (strain ATCC VR-813 / DSM 19441 / 03DC25 / GPIC) (Chlamydophila caviae).